We begin with the raw amino-acid sequence, 510 residues long: Maturase K (510 aa).

This sequence belongs to the intron maturase 2 family. MatK subfamily.

The protein localises to the plastid. Its subcellular location is the chloroplast. Its function is as follows. Usually encoded in the trnK tRNA gene intron. Probably assists in splicing its own and other chloroplast group II introns. This is Maturase K from Taxus cuspidata (Japanese yew).